Here is a 95-residue protein sequence, read N- to C-terminus: MSQIMYNYPAMLAHAAEMNTYSGALHAVGADIAAEQHALASAWQGDTGMTYQAWQAQWNQAMEELVRAYRAMATTHEQNTMAMSARDQAEGAKWG.

This sequence belongs to the WXG100 family. ESAT-6 subfamily. As to quaternary structure, forms a tight 1:1 complex with EsxG.

The protein localises to the secreted. The polypeptide is ESAT-6-like protein EsxH (Mycolicibacterium smegmatis (strain ATCC 700084 / mc(2)155) (Mycobacterium smegmatis)).